Consider the following 366-residue polypeptide: MISSLHRPTVARVDLEAIQANIDKIQRHLPKKVKTYAVVKANAYGHGAVAVSKAVEDQVDGYCVSNLDEALELRQAGIDKEILILGVILASELQLAIKHQLTITVASLEWLELAKKESVDFSQLHVHVKVDSGMGRIGVRSLAEANQLISILSDMGVQLDGIFTHFATADESDHAMFDKQLTFFKQLVEQLDKRPALVHASNSATSLWHSETIFSAIRLGIVIYGLNPSGNSLSLPCPLKEALSLESRLVHVKQIQAGDSVGYGASYVAAEPEYVGTLPIGYADGWTRNMQGFKVLVEGEFCDIIGRVSMDQLTIRLTKAYPIGTKVTLIGQQGKQVITATDVADYRGTINYEVLCLLSDRIPREY.

Catalysis depends on Lys40, which acts as the Proton acceptor; specific for D-alanine. Residue Lys40 is modified to N6-(pyridoxal phosphate)lysine. Residue Arg136 participates in substrate binding. Tyr263 serves as the catalytic Proton acceptor; specific for L-alanine. Met310 serves as a coordination point for substrate.

The protein belongs to the alanine racemase family. It depends on pyridoxal 5'-phosphate as a cofactor.

It catalyses the reaction L-alanine = D-alanine. Its pathway is amino-acid biosynthesis; D-alanine biosynthesis; D-alanine from L-alanine: step 1/1. Its function is as follows. Catalyzes the interconversion of L-alanine and D-alanine. May also act on other amino acids. The sequence is that of Alanine racemase (alr) from Streptococcus equi subsp. zooepidemicus (strain H70).